Reading from the N-terminus, the 120-residue chain is Large ribosomal subunit protein bL19 (120 aa).

This sequence belongs to the bacterial ribosomal protein bL19 family.

Functionally, this protein is located at the 30S-50S ribosomal subunit interface and may play a role in the structure and function of the aminoacyl-tRNA binding site. This Acaryochloris marina (strain MBIC 11017) protein is Large ribosomal subunit protein bL19.